Reading from the N-terminus, the 137-residue chain is Large ribosomal subunit protein uL16 (137 aa).

A disordered region spans residues 1–22 (MLQPKRTKFRKQQKGRNRGLAH).

It belongs to the universal ribosomal protein uL16 family. In terms of assembly, part of the 50S ribosomal subunit.

In terms of biological role, binds 23S rRNA and is also seen to make contacts with the A and possibly P site tRNAs. This Saccharophagus degradans (strain 2-40 / ATCC 43961 / DSM 17024) protein is Large ribosomal subunit protein uL16.